Reading from the N-terminus, the 451-residue chain is Histidinol dehydrogenase (451 aa).

The disordered stretch occupies residues 1–20 (MLNVTDLRGHTPSKSDIRRA). Positions 7–19 (LRGHTPSKSDIRR) are enriched in basic and acidic residues. 3 residues coordinate NAD(+): Y129, Q193, and N218. The substrate site is built by T241, Q263, and H266. 2 residues coordinate Zn(2+): Q263 and H266. Catalysis depends on proton acceptor residues E332 and H333. The substrate site is built by H333, D366, E420, and H425. D366 contributes to the Zn(2+) binding site. Position 425 (H425) interacts with Zn(2+).

This sequence belongs to the histidinol dehydrogenase family. Zn(2+) serves as cofactor.

It carries out the reaction L-histidinol + 2 NAD(+) + H2O = L-histidine + 2 NADH + 3 H(+). Its pathway is amino-acid biosynthesis; L-histidine biosynthesis; L-histidine from 5-phospho-alpha-D-ribose 1-diphosphate: step 9/9. Its function is as follows. Catalyzes the sequential NAD-dependent oxidations of L-histidinol to L-histidinaldehyde and then to L-histidine. The polypeptide is Histidinol dehydrogenase (Corynebacterium efficiens (strain DSM 44549 / YS-314 / AJ 12310 / JCM 11189 / NBRC 100395)).